We begin with the raw amino-acid sequence, 508 residues long: Erythropoietin receptor (508 aa).

The N-terminal stretch at 1–24 (MNHLWTHLWPGVGSLCLLLAGAAW) is a signal peptide. Residues 25–250 (ASLPKPLDPK…SLLTASDLDP (226 aa)) are Extracellular-facing. A disulfide bridge links Cys-52 with Cys-62. Asn-76 carries N-linked (GlcNAc...) asparagine glycosylation. Cys-91 and Cys-107 are oxidised to a cystine. The Fibronectin type-III domain occupies 148–247 (PPAGLLARRA…EPASLLTASD (100 aa)). N-linked (GlcNAc...) asparagine glycosylation occurs at Asn-184. The short motif at 233 to 237 (WSAWS) is the WSXWS motif element. A helical membrane pass occupies residues 251–273 (LILTLSLILVLILLLLAVLALLS). The Cytoplasmic segment spans residues 274–508 (HRRTLKQKIW…PSPPGYVACS (235 aa)). Lys-281 is covalently cross-linked (Glycyl lysine isopeptide (Lys-Gly) (interchain with G-Cter in ubiquitin)). The short motif at 282-290 (IWPGIPSPE) is the Box 1 motif element. Residues Tyr-368 and Tyr-426 each carry the phosphotyrosine; by JAK2 modification. The short motif at 452-457 (IKYLYL) is the ITIM motif element. Lys-453 participates in a covalent cross-link: Glycyl lysine isopeptide (Lys-Gly) (interchain with G-Cter in ubiquitin). Phosphotyrosine; by JAK2 occurs at positions 454, 456, 468, 489, and 504. Positions 467 to 508 (DYSSGGSQGAQGDSLNSPFLNPYENSLIPAPEPSPPGYVACS) are disordered.

It belongs to the type I cytokine receptor family. Type 1 subfamily. In terms of assembly, forms homodimers on EPO stimulation. The tyrosine-phosphorylated form interacts with several SH2 domain-containing proteins including LYN, the adapter protein SH2B2, PTPN6, PTPN11, JAK2, PI3 kinases, STAT5A/B, SOCS3, CRKL. Interacts with INPP5D/SHIP1. SH2B2 binding inhibits the JAK-STAT signaling. Interacts with RHEX; this interaction occurs in a erythropoietin (EPO)-dependent manner. Interacts with ATXN2L. Post-translationally, on EPO stimulation, phosphorylated on C-terminal tyrosine residues by JAK2. The phosphotyrosine motifs are also recruitment sites for several SH2-containing proteins and adapter proteins which mediate cell proliferation. Phosphorylation on Tyr-454 is required for PTPN6 interaction, Tyr-426 for PTPN11. Tyr-426 is also required for SOCS3 binding, but Tyr-454/Tyr-456 motif is the preferred binding site. In terms of processing, ubiquitinated by the ECS(SOCS2) complex following ligand-binding and phosphorylation by JAK2, leading to its degradation by the proteasome. Regulation by the ECS(SOCS2) complex acts as a negative feedback loop of erythropoietin-mediated signaling pathway. Ubiquitination at Lys-281 mediates receptor internalization, whereas ubiquitination at Lys-453 promotes trafficking of activated receptors to the lysosomes for degradation. Ubiquitinated by NOSIP; appears to be either multi-monoubiquitinated or polyubiquitinated. Ubiquitination mediates proliferation and survival of EPO-dependent cells.

The protein resides in the cell membrane. Functionally, receptor for erythropoietin, which mediates erythropoietin-induced erythroblast proliferation and differentiation. Upon EPO stimulation, EPOR dimerizes triggering the JAK2/STAT5 signaling cascade. In some cell types, can also activate STAT1 and STAT3. May also activate the LYN tyrosine kinase. In terms of biological role, isoform EPOR-T acts as a dominant-negative receptor of EPOR-mediated signaling. The polypeptide is Erythropoietin receptor (EPOR) (Canis lupus familiaris (Dog)).